A 488-amino-acid polypeptide reads, in one-letter code: Cobyric acid synthase (488 aa).

The GATase cobBQ-type domain maps to 248–441 (VLRVVVPALP…VHGLFDTPAA (194 aa)). Catalysis depends on Cys328, which acts as the Nucleophile. The active site involves His433.

This sequence belongs to the CobB/CobQ family. CobQ subfamily.

Its pathway is cofactor biosynthesis; adenosylcobalamin biosynthesis. Its function is as follows. Catalyzes amidations at positions B, D, E, and G on adenosylcobyrinic A,C-diamide. NH(2) groups are provided by glutamine, and one molecule of ATP is hydrogenolyzed for each amidation. This Burkholderia vietnamiensis (strain G4 / LMG 22486) (Burkholderia cepacia (strain R1808)) protein is Cobyric acid synthase.